Consider the following 561-residue polypeptide: Probable galacturonosyltransferase 9 (561 aa).

The Cytoplasmic segment spans residues 1 to 27 (MAVAFRGGRGGVGSGQSTGLRSFFSYR). The helical; Signal-anchor for type II membrane protein transmembrane segment at 28-48 (IFISALFSFLFLATFSVVLNS) threads the bilayer. The Lumenal segment spans residues 49-561 (SRHQPHQDHT…EFVQMCNFGL (513 aa)). N-linked (GlcNAc...) asparagine glycans are attached at residues Asn-124, Asn-320, Asn-346, and Asn-426.

Belongs to the glycosyltransferase 8 family. As to expression, expressed in roots, inflorescences, siliques, leaves and stems.

The protein resides in the golgi apparatus membrane. Its pathway is glycan metabolism; pectin biosynthesis. Functionally, may be involved in pectin synthesis. This is Probable galacturonosyltransferase 9 (GAUT9) from Arabidopsis thaliana (Mouse-ear cress).